The primary structure comprises 1123 residues: Phytochrome 1 (1123 aa).

Residues Met-1–Lys-15 are compositionally biased toward low complexity. The interval Met-1–Ser-20 is disordered. In terms of domain architecture, GAF spans Asp-216–Val-395. Position 321 (Cys-321) interacts with phytochromobilin. PAS domains follow at residues Val-610–Glu-681 and Asp-744–Met-815. The region spanning Tyr-895–Gln-1115 is the Histidine kinase domain.

This sequence belongs to the phytochrome family. As to quaternary structure, homodimer. Post-translationally, contains one covalently linked phytochromobilin chromophore.

It is found in the cytoplasm. Its function is as follows. Regulatory photoreceptor which exists in two forms that are reversibly interconvertible by light: the Pr form that absorbs maximally in the red region of the spectrum and the Pfr form that absorbs maximally in the far-red region. Photoconversion of Pr to Pfr induces an array of morphogenetic responses, whereas reconversion of Pfr to Pr cancels the induction of those responses. Pfr controls the expression of a number of nuclear genes including those encoding the small subunit of ribulose-bisphosphate carboxylase, chlorophyll A/B binding protein, protochlorophyllide reductase, rRNA, etc. It also controls the expression of its own gene(s) in a negative feedback fashion. Mediates chloroplast avoidance movement in cytoplasm. The protein is Phytochrome 1 (PHY1) of Physcomitrium patens (Spreading-leaved earth moss).